Reading from the N-terminus, the 236-residue chain is Transmembrane protein 65 (236 aa).

A mitochondrion-targeting transit peptide spans 1-57; sequence MSRLLPLLRSRTARSLRPGPAAAAAPRPPSWCCCGRGLLALAAPGGPRALGTHPKKE. Over 58–106 the chain is Cytoplasmic; that stretch reads PIEALNTAQGARDFIYSLHSSERSCLLKELHRFESIAIAQEKLEAQPPT. The chain crosses the membrane as a helical span at residues 107-127; the sequence is PGQLRYVFIHNAIPFIGFGFL. Over 128-138 the chain is Extracellular; it reads DNAIMIVAGTH. The chain crosses the membrane as a helical span at residues 139 to 161; that stretch reads IELSIGIILGISTMAAAALGNLV. Topologically, residues 162-205 are cytoplasmic; sequence SDLAGLGLAGYVEALASRLGLSIPDLSPKQVDMWQTRVSSHLGK. Residues 206–226 form a helical membrane-spanning segment; sequence AVGVTIGCILGMFPLIFFGGG. Topologically, residues 227–236 are extracellular; it reads EDDEKLEKKN.

As to quaternary structure, monomer. Homodimer. Interacts with GJA1. Interacts weakly with DSP. Interacts with SCN1B.

The protein resides in the cell membrane. Its subcellular location is the mitochondrion inner membrane. Its function is as follows. Essential for maintaining proper cardiac intercalated disk (ICD) structure and function as well as cardiac conduction velocity in the heart. Its association with SCN1B is required for stabilizing the perinexus in the ICD and for localization of GJA1 and SCN5A to the ICD. May regulate the function of the gap junction protein GJA1 and may contribute to the stability and proper localization of GJA1 to cardiac intercalated disk thereby regulating gap junction communication. Regulates mitochondrial respiration and mitochondrial DNA copy number maintenance. The chain is Transmembrane protein 65 (TMEM65) from Bos taurus (Bovine).